We begin with the raw amino-acid sequence, 385 residues long: Na(+)/H(+) antiporter NhaA (385 aa).

Helical transmembrane passes span Tyr-9–Asp-29, Ile-45–Phe-65, Ile-87–Val-107, Gly-114–Gly-134, Ala-155–Val-175, Thr-198–Gln-218, Gly-220–Asn-235, Ala-245–Val-265, Ile-282–Leu-302, Phe-312–Met-332, and Gln-345–Met-365.

The protein belongs to the NhaA Na(+)/H(+) (TC 2.A.33) antiporter family.

The protein localises to the cell membrane. The enzyme catalyses Na(+)(in) + 2 H(+)(out) = Na(+)(out) + 2 H(+)(in). Functionally, na(+)/H(+) antiporter that extrudes sodium in exchange for external protons. The polypeptide is Na(+)/H(+) antiporter NhaA (Tropheryma whipplei (strain TW08/27) (Whipple's bacillus)).